The primary structure comprises 298 residues: Small ribosomal subunit protein uS3 (298 aa).

One can recognise a KH type-2 domain in the interval 38–106 (IRRRLSRGME…QVQLNILEVK (69 aa)). Positions 212-298 (KQKQQESEVR…EPRADEKTEG (87 aa)) are disordered. Residues 214–237 (KQQESEVRPPRGERGERGGRPERG) are compositionally biased toward basic and acidic residues. Polar residues predominate over residues 265-278 (GSAQSPEQAQTSGD).

This sequence belongs to the universal ribosomal protein uS3 family. Part of the 30S ribosomal subunit. Forms a tight complex with proteins S10 and S14.

In terms of biological role, binds the lower part of the 30S subunit head. Binds mRNA in the 70S ribosome, positioning it for translation. The protein is Small ribosomal subunit protein uS3 of Saccharopolyspora erythraea (strain ATCC 11635 / DSM 40517 / JCM 4748 / NBRC 13426 / NCIMB 8594 / NRRL 2338).